The primary structure comprises 310 residues: MEFFYEEQVACIEDDKISNSHTKETGSTENTENNELQSRDDKTNEAFQKLEEEVNKRYEKTTSAFKKLVIEKDDGIEINLPISNETTETAQKYLKKLDENIHSVESLAQSYWSKMKTKNFWSGFSSFDNAAENDSNDKDENSKENEIAVGGNRTEAELRTLSKDKSVYLDNKMDLQLDPFDVDEKTEEICSILQGDKDISKLMNDIVPHKISYKDFWHIYFLQRNKILDKESKRKEILSKKEKETEEKEVEWDDEEEEEDDDKVEAVADNKSKGETKVAVSQEGLKDVSDHVGLANKDESKDDDDDDDWE.

Composition is skewed to basic and acidic residues over residues 15–26 (DKISNSHTKETG) and 135–146 (SNDKDENSKENE). Disordered stretches follow at residues 15 to 45 (DKIS…KTNE) and 131 to 151 (AEND…AVGG). The BSD domain occupies 176-228 (QLDPFDVDEKTEEICSILQGDKDISKLMNDIVPHKISYKDFWHIYFLQRNKIL). Residues 240 to 310 (KKEKETEEKE…KDDDDDDDWE (71 aa)) form a disordered region. Acidic residues predominate over residues 247 to 263 (EKEVEWDDEEEEEDDDK). Basic and acidic residues-rich tracts occupy residues 264 to 276 (VEAV…KGET) and 284 to 300 (GLKD…KDES). Residues 301 to 310 (KDDDDDDDWE) show a composition bias toward acidic residues.

Acts in ubiquitin metabolism and is necessary for the control of single-copy DNA replication. This Saccharomyces cerevisiae (strain ATCC 204508 / S288c) (Baker's yeast) protein is Protein DOS2 (DOS2).